The sequence spans 612 residues: Dihydroxy-acid dehydratase (612 aa).

Residue Asp-81 participates in Mg(2+) binding. Cys-122 is a binding site for [2Fe-2S] cluster. The Mg(2+) site is built by Asp-123 and Lys-124. Lys-124 bears the N6-carboxylysine mark. Cys-193 is a binding site for [2Fe-2S] cluster. Residue Glu-489 coordinates Mg(2+). Ser-515 functions as the Proton acceptor in the catalytic mechanism.

The protein belongs to the IlvD/Edd family. As to quaternary structure, homodimer. Requires [2Fe-2S] cluster as cofactor. Mg(2+) is required as a cofactor.

The catalysed reaction is (2R)-2,3-dihydroxy-3-methylbutanoate = 3-methyl-2-oxobutanoate + H2O. It catalyses the reaction (2R,3R)-2,3-dihydroxy-3-methylpentanoate = (S)-3-methyl-2-oxopentanoate + H2O. It participates in amino-acid biosynthesis; L-isoleucine biosynthesis; L-isoleucine from 2-oxobutanoate: step 3/4. Its pathway is amino-acid biosynthesis; L-valine biosynthesis; L-valine from pyruvate: step 3/4. Functions in the biosynthesis of branched-chain amino acids. Catalyzes the dehydration of (2R,3R)-2,3-dihydroxy-3-methylpentanoate (2,3-dihydroxy-3-methylvalerate) into 2-oxo-3-methylpentanoate (2-oxo-3-methylvalerate) and of (2R)-2,3-dihydroxy-3-methylbutanoate (2,3-dihydroxyisovalerate) into 2-oxo-3-methylbutanoate (2-oxoisovalerate), the penultimate precursor to L-isoleucine and L-valine, respectively. This Teredinibacter turnerae (strain ATCC 39867 / T7901) protein is Dihydroxy-acid dehydratase.